A 314-amino-acid polypeptide reads, in one-letter code: 4-hydroxy-3-methylbut-2-enyl diphosphate reductase (314 aa).

Cys12 provides a ligand contact to [4Fe-4S] cluster. The (2E)-4-hydroxy-3-methylbut-2-enyl diphosphate site is built by His41 and His74. Positions 41 and 74 each coordinate dimethylallyl diphosphate. His41 and His74 together coordinate isopentenyl diphosphate. Cys96 serves as a coordination point for [4Fe-4S] cluster. (2E)-4-hydroxy-3-methylbut-2-enyl diphosphate is bound at residue His124. Position 124 (His124) interacts with dimethylallyl diphosphate. His124 serves as a coordination point for isopentenyl diphosphate. Catalysis depends on Glu126, which acts as the Proton donor. Thr167 lines the (2E)-4-hydroxy-3-methylbut-2-enyl diphosphate pocket. Cys197 lines the [4Fe-4S] cluster pocket. 4 residues coordinate (2E)-4-hydroxy-3-methylbut-2-enyl diphosphate: Ser225, Ser226, Asn227, and Ser269. Dimethylallyl diphosphate contacts are provided by Ser225, Ser226, Asn227, and Ser269. Isopentenyl diphosphate is bound by residues Ser225, Ser226, Asn227, and Ser269.

The protein belongs to the IspH family. [4Fe-4S] cluster is required as a cofactor.

The catalysed reaction is isopentenyl diphosphate + 2 oxidized [2Fe-2S]-[ferredoxin] + H2O = (2E)-4-hydroxy-3-methylbut-2-enyl diphosphate + 2 reduced [2Fe-2S]-[ferredoxin] + 2 H(+). The enzyme catalyses dimethylallyl diphosphate + 2 oxidized [2Fe-2S]-[ferredoxin] + H2O = (2E)-4-hydroxy-3-methylbut-2-enyl diphosphate + 2 reduced [2Fe-2S]-[ferredoxin] + 2 H(+). Its pathway is isoprenoid biosynthesis; dimethylallyl diphosphate biosynthesis; dimethylallyl diphosphate from (2E)-4-hydroxy-3-methylbutenyl diphosphate: step 1/1. It functions in the pathway isoprenoid biosynthesis; isopentenyl diphosphate biosynthesis via DXP pathway; isopentenyl diphosphate from 1-deoxy-D-xylulose 5-phosphate: step 6/6. Functionally, catalyzes the conversion of 1-hydroxy-2-methyl-2-(E)-butenyl 4-diphosphate (HMBPP) into a mixture of isopentenyl diphosphate (IPP) and dimethylallyl diphosphate (DMAPP). Acts in the terminal step of the DOXP/MEP pathway for isoprenoid precursor biosynthesis. This is 4-hydroxy-3-methylbut-2-enyl diphosphate reductase from Glaesserella parasuis serovar 5 (strain SH0165) (Haemophilus parasuis).